The chain runs to 215 residues: Adenylate kinase (215 aa).

Residue glycine 10–threonine 15 coordinates ATP. Positions serine 30–valine 59 are NMP. AMP is bound by residues threonine 31, arginine 36, glycine 57 to valine 59, glycine 85 to arginine 88, and glutamine 92. The LID stretch occupies residues glycine 122–aspartate 159. ATP is bound by residues arginine 123 and isoleucine 132 to tyrosine 133. Residues arginine 156 and arginine 167 each contribute to the AMP site. Residue glycine 201 coordinates ATP.

Belongs to the adenylate kinase family. As to quaternary structure, monomer.

It is found in the cytoplasm. The catalysed reaction is AMP + ATP = 2 ADP. The protein operates within purine metabolism; AMP biosynthesis via salvage pathway; AMP from ADP: step 1/1. Catalyzes the reversible transfer of the terminal phosphate group between ATP and AMP. Plays an important role in cellular energy homeostasis and in adenine nucleotide metabolism. This chain is Adenylate kinase, found in Pseudomonas syringae pv. syringae (strain B728a).